We begin with the raw amino-acid sequence, 511 residues long: Exodeoxyribonuclease 7 large subunit (511 aa).

This sequence belongs to the XseA family. In terms of assembly, heterooligomer composed of large and small subunits.

It localises to the cytoplasm. The enzyme catalyses Exonucleolytic cleavage in either 5'- to 3'- or 3'- to 5'-direction to yield nucleoside 5'-phosphates.. In terms of biological role, bidirectionally degrades single-stranded DNA into large acid-insoluble oligonucleotides, which are then degraded further into small acid-soluble oligonucleotides. The chain is Exodeoxyribonuclease 7 large subunit from Brucella ovis (strain ATCC 25840 / 63/290 / NCTC 10512).